We begin with the raw amino-acid sequence, 539 residues long: Glycine betaine transporter 2 (539 aa).

Helical transmembrane passes span 44-64 (LTNP…LLAL), 85-105 (FGAY…ALAF), 129-149 (IVLC…EPIA), 175-195 (FMHW…IVLM), 231-251 (CSII…GLQI), 265-285 (FITQ…SALS), 299-319 (IILS…SFII), 348-368 (WWTV…AIFI), 380-400 (LILS…SIVG), 426-446 (VLLA…LFLI), 480-500 (FWGL…SGGI), and 503-523 (LQSF…PSIL).

Belongs to the BCCT transporter (TC 2.A.15) family.

The protein resides in the cell inner membrane. In terms of biological role, involved in the uptake of the osmoprotectant glycine betaine. This is Glycine betaine transporter 2 from Vibrio parahaemolyticus serotype O3:K6 (strain RIMD 2210633).